Here is a 156-residue protein sequence, read N- to C-terminus: Eosinophil cationic protein 2 (156 aa).

The signal sequence occupies residues 1–25; the sequence is MGPKLLESRLCLLLLLGLVLMLASC. H38 (proton acceptor) is an active-site residue. 4 cysteine pairs are disulfide-bonded: C47-C106, C61-C119, C79-C134, and C86-C94. Residue 62-66 coordinates substrate; sequence KGLNT. N-linked (GlcNAc...) asparagine glycosylation is found at N89, N96, and N107. H151 functions as the Proton donor in the catalytic mechanism.

The protein belongs to the pancreatic ribonuclease family.

The protein resides in the cytoplasmic granule. Its function is as follows. Cytotoxin and helminthotoxin with ribonuclease activity. Selectively chemotactic for dendritic cells. Possesses a wide variety of biological activities. This Mus musculus (Mouse) protein is Eosinophil cationic protein 2 (Ear2).